The following is a 122-amino-acid chain: UPF0102 protein CPR_1677 (122 aa).

It belongs to the UPF0102 family.

This is UPF0102 protein CPR_1677 from Clostridium perfringens (strain SM101 / Type A).